The sequence spans 120 residues: NAD(P)H-quinone oxidoreductase subunit 3, chloroplastic (120 aa).

A run of 3 helical transmembrane segments spans residues 9–29 (IFWAFLIISSVIPILAFLISA), 64–84 (MFALVFVVFDVETVFLYPWAM), and 88–108 (VLGVPVFIEAFIFMLILIVGL).

Belongs to the complex I subunit 3 family. In terms of assembly, NDH is composed of at least 16 different subunits, 5 of which are encoded in the nucleus.

It is found in the plastid. It localises to the chloroplast thylakoid membrane. The catalysed reaction is a plastoquinone + NADH + (n+1) H(+)(in) = a plastoquinol + NAD(+) + n H(+)(out). The enzyme catalyses a plastoquinone + NADPH + (n+1) H(+)(in) = a plastoquinol + NADP(+) + n H(+)(out). Functionally, NDH shuttles electrons from NAD(P)H:plastoquinone, via FMN and iron-sulfur (Fe-S) centers, to quinones in the photosynthetic chain and possibly in a chloroplast respiratory chain. The immediate electron acceptor for the enzyme in this species is believed to be plastoquinone. Couples the redox reaction to proton translocation, and thus conserves the redox energy in a proton gradient. In Citrus sinensis (Sweet orange), this protein is NAD(P)H-quinone oxidoreductase subunit 3, chloroplastic.